We begin with the raw amino-acid sequence, 98 residues long: NADH-ubiquinone oxidoreductase chain 4L (98 aa).

3 helical membrane-spanning segments follow: residues 1–21 (MTPL…GVLI), 28–48 (STLL…SLLI), and 59–79 (APLI…ALLV).

The protein belongs to the complex I subunit 4L family. Core subunit of respiratory chain NADH dehydrogenase (Complex I) which is composed of 45 different subunits.

The protein resides in the mitochondrion inner membrane. It carries out the reaction a ubiquinone + NADH + 5 H(+)(in) = a ubiquinol + NAD(+) + 4 H(+)(out). Functionally, core subunit of the mitochondrial membrane respiratory chain NADH dehydrogenase (Complex I) which catalyzes electron transfer from NADH through the respiratory chain, using ubiquinone as an electron acceptor. Part of the enzyme membrane arm which is embedded in the lipid bilayer and involved in proton translocation. This is NADH-ubiquinone oxidoreductase chain 4L (MT-ND4L) from Tarsipes rostratus (Honey possum).